Here is a 120-residue protein sequence, read N- to C-terminus: Fluoride-specific ion channel FluC (120 aa).

A run of 3 helical transmembrane segments spans residues 30–50, 66–86, and 96–116; these read FGTLAVNILGSLLMGILYGLL, VGFLGALTTFSTFSMDSLLLL, and LNIILNVMVCIFMAWLGLQLV. Na(+)-binding residues include glycine 70 and threonine 73.

Belongs to the fluoride channel Fluc/FEX (TC 1.A.43) family.

The protein resides in the cell inner membrane. It catalyses the reaction fluoride(in) = fluoride(out). Na(+) is not transported, but it plays an essential structural role and its presence is essential for fluoride channel function. In terms of biological role, fluoride-specific ion channel. Important for reducing fluoride concentration in the cell, thus reducing its toxicity. The polypeptide is Fluoride-specific ion channel FluC (Pseudoalteromonas translucida (strain TAC 125)).